The chain runs to 370 residues: Aminomethyltransferase (370 aa).

This sequence belongs to the GcvT family. In terms of assembly, the glycine cleavage system is composed of four proteins: P, T, L and H.

It carries out the reaction N(6)-[(R)-S(8)-aminomethyldihydrolipoyl]-L-lysyl-[protein] + (6S)-5,6,7,8-tetrahydrofolate = N(6)-[(R)-dihydrolipoyl]-L-lysyl-[protein] + (6R)-5,10-methylene-5,6,7,8-tetrahydrofolate + NH4(+). Functionally, the glycine cleavage system catalyzes the degradation of glycine. The sequence is that of Aminomethyltransferase from Prochlorococcus marinus (strain MIT 9515).